The chain runs to 228 residues: Uracil-DNA glycosylase (228 aa).

The active-site Proton acceptor is D64.

It belongs to the uracil-DNA glycosylase (UDG) superfamily. UNG family.

It is found in the cytoplasm. The catalysed reaction is Hydrolyzes single-stranded DNA or mismatched double-stranded DNA and polynucleotides, releasing free uracil.. Functionally, excises uracil residues from the DNA which can arise as a result of misincorporation of dUMP residues by DNA polymerase or due to deamination of cytosine. This Yersinia enterocolitica serotype O:8 / biotype 1B (strain NCTC 13174 / 8081) protein is Uracil-DNA glycosylase.